The sequence spans 316 residues: ATP synthase gamma chain (316 aa).

Belongs to the ATPase gamma chain family. In terms of assembly, F-type ATPases have 2 components, CF(1) - the catalytic core - and CF(0) - the membrane proton channel. CF(1) has five subunits: alpha(3), beta(3), gamma(1), delta(1), epsilon(1). CF(0) has three main subunits: a, b and c.

It is found in the cellular thylakoid membrane. Its function is as follows. Produces ATP from ADP in the presence of a proton gradient across the membrane. The gamma chain is believed to be important in regulating ATPase activity and the flow of protons through the CF(0) complex. This chain is ATP synthase gamma chain, found in Synechococcus sp. (strain WH7803).